The following is a 592-amino-acid chain: Craniofacial development protein 2 (592 aa).

A compositionally biased stretch (basic and acidic residues) spans 1 to 16; that stretch reads MEEFDSKDISTSKDED. Disordered regions lie at residues 1-225 and 499-592; these read MEEF…KGQS and VTNE…DCNN. Positions 25–42 are enriched in acidic residues; it reads HEDDINELVKEDEVDGEE. Basic and acidic residues-rich tracts occupy residues 78–108 and 147–162; these read SRES…RQEE and KVEE…EVKL. Residues 175-184 are compositionally biased toward polar residues; sequence LTQQGRLSGR. Composition is skewed to basic and acidic residues over residues 185–207, 508–523, 552–562, and 580–592; these read TSED…RRAD, EEAK…EKPE, SVFKQDEKDKP, and EKCD…DCNN. The interval 499–578 is hydrophilic; that stretch reads VTNEEDATNE…SVPSLPAGSG (80 aa).

Post-translationally, phosphorylated by CK2 (casein kinase II) in vitro. In terms of tissue distribution, expressed in liver and lung with higher expression in brain.

It localises to the cytoplasm. The protein localises to the nucleus. This chain is Craniofacial development protein 2 (CFDP2), found in Bos taurus (Bovine).